A 124-amino-acid polypeptide reads, in one-letter code: Small ribosomal subunit protein bS6 (124 aa).

The disordered stretch occupies residues 99–124 (PLPAPRVMPGSEAAQQQQAEAAASAD). The segment covering 109-124 (SEAAQQQQAEAAASAD) has biased composition (low complexity).

This sequence belongs to the bacterial ribosomal protein bS6 family.

In terms of biological role, binds together with bS18 to 16S ribosomal RNA. This chain is Small ribosomal subunit protein bS6, found in Synechococcus sp. (strain CC9605).